The sequence spans 185 residues: Ribosome-recycling factor (185 aa).

It belongs to the RRF family.

The protein localises to the cytoplasm. In terms of biological role, responsible for the release of ribosomes from messenger RNA at the termination of protein biosynthesis. May increase the efficiency of translation by recycling ribosomes from one round of translation to another. This is Ribosome-recycling factor from Sulfurovum sp. (strain NBC37-1).